The sequence spans 261 residues: tRNA U34 carboxymethyltransferase (261 aa).

Carboxy-S-adenosyl-L-methionine-binding positions include Lys25, Trp39, Lys44, Gly63, 114 to 115 (VE), Tyr135, and Arg250.

It belongs to the class I-like SAM-binding methyltransferase superfamily. CmoB family. In terms of assembly, homotetramer.

It catalyses the reaction carboxy-S-adenosyl-L-methionine + 5-hydroxyuridine(34) in tRNA = 5-carboxymethoxyuridine(34) in tRNA + S-adenosyl-L-homocysteine + H(+). Its function is as follows. Catalyzes carboxymethyl transfer from carboxy-S-adenosyl-L-methionine (Cx-SAM) to 5-hydroxyuridine (ho5U) to form 5-carboxymethoxyuridine (cmo5U) at position 34 in tRNAs. The protein is tRNA U34 carboxymethyltransferase of Helicobacter pylori (strain Shi470).